Here is a 159-residue protein sequence, read N- to C-terminus: Nascent polypeptide-associated complex subunit beta (159 aa).

2 disordered regions span residues 1-39 (MDME…GMDD) and 124-159 (QSMQ…DKVE). Over residues 23 to 32 (TPRRKVKNVH) the composition is skewed to basic residues. The NAC-A/B domain maps to 36 to 101 (GMDDKKLQTS…GEDKELTELV (66 aa)). A compositionally biased stretch (acidic residues) spans 136 to 153 (KDDEEDDDDIPDLVEGEN).

This sequence belongs to the NAC-beta family. In terms of assembly, part of the nascent polypeptide-associated complex (NAC), consisting of EGD2 and EGD1. NAC associates with ribosomes via EGD1.

Its subcellular location is the cytoplasm. It localises to the nucleus. In terms of biological role, component of the nascent polypeptide-associated complex (NAC), a dynamic component of the ribosomal exit tunnel, protecting the emerging polypeptides from interaction with other cytoplasmic proteins to ensure appropriate nascent protein targeting. The NAC complex also promotes mitochondrial protein import by enhancing productive ribosome interactions with the outer mitochondrial membrane and blocks the inappropriate interaction of ribosomes translating non-secretory nascent polypeptides with translocation sites in the membrane of the endoplasmic reticulum. EGD1 may act as a transcription factor that exert a negative effect on the expression of several genes that are transcribed by RNA polymerase II. The protein is Nascent polypeptide-associated complex subunit beta (egd1) of Sclerotinia sclerotiorum (strain ATCC 18683 / 1980 / Ss-1) (White mold).